We begin with the raw amino-acid sequence, 274 residues long: MKLDTSGFETSMPMIGFGSSSDMLDELSSVPSFDLPRTKEFDGFQKKAKDMLKHAKGTTTLAFIFKGGVMVAADSRASMGGYISSQSVKKIIEINPYMLGTMAGGAADCQFWHRNLGIKCRLHELANKRRISVSGASKLLANMLYSYRGMGLSVGTMIAGWDETGPGLYYVDNEGGRLKGDRFSVGSGSPYAYGVLDSGYKYDMSVEEASELARRSIYHATFRDGASGGVASVYHVGPEGWTKLSGDDVGELHYHYYPVAPATAEQVMEEATAE.

Positions 1 to 57 (MKLDTSGFETSMPMIGFGSSSDMLDELSSVPSFDLPRTKEFDGFQKKAKDMLKHAKG) are cleaved as a propeptide — removed in mature form. The active-site Nucleophile is T58.

It belongs to the peptidase T1B family. In terms of assembly, component of the 20S core complex of the 26S proteasome. The 26S proteasome is composed of a core protease (CP), known as the 20S proteasome, capped at one or both ends by the 19S regulatory particle (RP/PA700). The 20S proteasome core is composed of 28 subunits that are arranged in four stacked rings, resulting in a barrel-shaped structure. The two end rings are each formed by seven alpha subunits, and the two central rings are each formed by seven beta subunits. The catalytic chamber with the active sites is on the inside of the barrel. As to expression, ubiquitous low levels, higher expression in siliques and flowers.

The protein resides in the cytoplasm. It localises to the nucleus. The enzyme catalyses Cleavage of peptide bonds with very broad specificity.. In terms of biological role, the proteasome is a multicatalytic proteinase complex which is characterized by its ability to cleave peptides with Arg, Phe, Tyr, Leu, and Glu adjacent to the leaving group at neutral or slightly basic pH. The proteasome has an ATP-dependent proteolytic activity. The polypeptide is Proteasome subunit beta type-5-A (PBE1) (Arabidopsis thaliana (Mouse-ear cress)).